A 391-amino-acid polypeptide reads, in one-letter code: Nucleosome assembly protein 1-like 1 (391 aa).

Residues 1-10 show a composition bias toward basic and acidic residues; it reads MADIDNKEQS. The tract at residues 1–32 is disordered; the sequence is MADIDNKEQSELDQDLEDVEEVEEEETGEETK. Alanine 2 is subject to N-acetylalanine. Serine 10 is modified (phosphoserine). Positions 11-28 are enriched in acidic residues; that stretch reads ELDQDLEDVEEVEEEETG. Phosphothreonine occurs at positions 62 and 64. Residue serine 69 is modified to Phosphoserine. Lysine 116 carries the N6-acetyllysine modification. The short motif at 125–150 is the NAP1L motif element; it reads YEPTEEECEWKPDEEDEVSEELKEKA. Acidic residues predominate over residues 131–143; the sequence is ECEWKPDEEDEVS. Residues 131-163 are disordered; the sequence is ECEWKPDEEDEVSEELKEKAKIEDEKKDEEKED. The residue at position 143 (serine 143) is a Phosphoserine. The segment covering 144–163 has biased composition (basic and acidic residues); it reads EELKEKAKIEDEKKDEEKED. The short motif at 273-279 is the Nuclear localization signal element; that stretch reads IKKKQKH. Residues 346–376 are compositionally biased toward acidic residues; that stretch reads AIEDDDDDYDEEGEEADEEGEEEGDEENDPD. The interval 346-391 is disordered; it reads AIEDDDDDYDEEGEEADEEGEEEGDEENDPDYDPKKDQNPAECKQQ. Residues glutamate 359 and glutamate 360 each carry the 5-glutamyl polyglycine modification. The segment covering 377–391 has biased composition (basic and acidic residues); sequence YDPKKDQNPAECKQQ. Cysteine 388 is modified (cysteine methyl ester). A lipid anchor (S-farnesyl cysteine) is attached at cysteine 388. Positions 389 to 391 are cleaved as a propeptide — removed in mature form; the sequence is KQQ.

It belongs to the nucleosome assembly protein (NAP) family. In terms of assembly, homodimer. The dimer binds strongly and sequentially to single and double H2A-H2B heterodimers. Interacts with ERCC6; this interaction increases ERCC6 processivity. Interacts with RAD54. Interacts with SETD1A. Polyglycylated by TTLL10 on glutamate residues, resulting in polyglycine chains on the gamma-carboxyl group. Both polyglutamylation and polyglycylation modifications can coexist on the same protein on adjacent residues, and lowering polyglycylation levels increases polyglutamylation, and reciprocally. In terms of processing, polyglutamylated by TTLL4 on glutamate residues, resulting in polyglutamate chains on the gamma-carboxyl group. Both polyglutamylation and polyglycylation modifications can coexist on the same protein on adjacent residues, and lowering polyglycylation levels increases polyglutamylation, and reciprocally. Highly expressed in the brain (at protein level). High expression in cerebral cortex, not in cerebellar cortex.

The protein resides in the nucleus. It localises to the cytoplasm. It is found in the melanosome. Its function is as follows. Histone chaperone that plays a role in the nuclear import of H2A-H2B and nucleosome assembly. Also participates in several important DNA repair mechanisms: greatly enhances ERCC6-mediated chromatin remodeling which is essential for transcription-coupled nucleotide excision DNA repair. Also stimulates homologous recombination (HR) by RAD51 and RAD54 which is essential in mitotic DNA double strand break (DSB) repair. Plays a key role in the regulation of embryonic neurogenesis. Promotes the proliferation of neural progenitors and inhibits neuronal differentiation during cortical development. Regulates neurogenesis via the modulation of RASSF10; regulates RASSF10 expression by promoting SETD1A-mediated H3K4 methylation at the RASSF10 promoter. This is Nucleosome assembly protein 1-like 1 (Nap1l1) from Mus musculus (Mouse).